The primary structure comprises 144 residues: 3-hydroxyacyl-[acyl-carrier-protein] dehydratase FabZ (144 aa).

Histidine 47 is a catalytic residue.

The protein belongs to the thioester dehydratase family. FabZ subfamily.

Its subcellular location is the cytoplasm. The enzyme catalyses a (3R)-hydroxyacyl-[ACP] = a (2E)-enoyl-[ACP] + H2O. Its function is as follows. Involved in unsaturated fatty acids biosynthesis. Catalyzes the dehydration of short chain beta-hydroxyacyl-ACPs and long chain saturated and unsaturated beta-hydroxyacyl-ACPs. The chain is 3-hydroxyacyl-[acyl-carrier-protein] dehydratase FabZ from Nitrosomonas eutropha (strain DSM 101675 / C91 / Nm57).